The sequence spans 116 residues: MSYDEGGEELEEIKRRKLLEYQRALEAEKAKEEQKAREEAMRQEILRRILTPEARARLSNLKLVKPELVEALEIQLIQLAESRSVRVPIDDETLKQILARLYEAQRAREVKFRVSF.

Belongs to the PDCD5 family.

In Thermofilum pendens (strain DSM 2475 / Hrk 5), this protein is DNA-binding protein Tpen_0471.